The primary structure comprises 417 residues: Lissencephaly-1 homolog (417 aa).

In terms of domain architecture, LisH spans 7 to 39; that stretch reads QKEELNRAIADYLFANGYVKALNAFREESQLAG. The stretch at 54 to 86 forms a coiled coil; the sequence is TSVIRLQKKVMDLEAKLNEAEKEFQSMQNAIGF. WD repeat units lie at residues 120 to 159, 162 to 203, 204 to 243, 246 to 285, 288 to 340, 343 to 382, and 385 to 417; these read GHRSPITRVLFHPHYNVFVSASEDASIKVWDYETGEFEHT, GHTD…KTLT, GHDHNVSSVAFLPSGDFLVSASRDKTIKMWEVSTGYCTKT, GHTEWIRSVRPSPEGNLLASCSNDHTIRIWSVESRECQVV, GHEH…CLFV, GHDNWVRQLVFHPHGRLLLSASDDKTIRVWDLKNRRCHKT, and AHSHFVTSLDVNRLAPYAITGSVDQTIHIWDCR.

Belongs to the WD repeat LIS1/nudF family.

The protein localises to the cytoplasm. The protein resides in the cytoskeleton. It localises to the microtubule organizing center. Its subcellular location is the centrosome. Functionally, positively regulates the activity of the minus-end directed microtubule motor protein dynein. May enhance dynein-mediated microtubule sliding by targeting dynein to the microtubule plus end. Required for several dynein- and microtubule-dependent processes. The protein is Lissencephaly-1 homolog of Schistosoma mansoni (Blood fluke).